Reading from the N-terminus, the 382-residue chain is Pyrimidine monooxygenase RutA (382 aa).

FMN-binding positions include 68–69, Asn134, Glu143, 159–160, and Ser209; these read IK and RY.

It belongs to the NtaA/SnaA/DszA monooxygenase family. RutA subfamily.

The enzyme catalyses uracil + FMNH2 + NADH + O2 = (Z)-3-ureidoacrylate + FMN + NAD(+) + H2O + H(+). It catalyses the reaction thymine + FMNH2 + NADH + O2 = (Z)-2-methylureidoacrylate + FMN + NAD(+) + H2O + H(+). Functionally, catalyzes the pyrimidine ring opening between N-3 and C-4 by an unusual flavin hydroperoxide-catalyzed mechanism, adding oxygen atoms in the process to yield ureidoacrylate peracid, that immediately reacts with FMN forming ureidoacrylate and FMN-N(5)-oxide. The FMN-N(5)-oxide reacts spontaneously with NADH to produce FMN. Requires the flavin reductase RutF to regenerate FMN in vivo. The chain is Pyrimidine monooxygenase RutA from Escherichia coli O8 (strain IAI1).